The sequence spans 335 residues: Zinc-type alcohol dehydrogenase-like protein SAR2277 (335 aa).

Belongs to the zinc-containing alcohol dehydrogenase family. Quinone oxidoreductase subfamily.

This is Zinc-type alcohol dehydrogenase-like protein SAR2277 from Staphylococcus aureus (strain MRSA252).